The chain runs to 613 residues: Dihydroxy-acid dehydratase (613 aa).

Asp-81 provides a ligand contact to Mg(2+). Cys-122 contributes to the [2Fe-2S] cluster binding site. Mg(2+) is bound by residues Asp-123 and Lys-124. Lys-124 is subject to N6-carboxylysine. Cys-195 contacts [2Fe-2S] cluster. Glu-491 contributes to the Mg(2+) binding site. Residue Ser-517 is the Proton acceptor of the active site.

This sequence belongs to the IlvD/Edd family. As to quaternary structure, homodimer. Requires [2Fe-2S] cluster as cofactor. The cofactor is Mg(2+).

The enzyme catalyses (2R)-2,3-dihydroxy-3-methylbutanoate = 3-methyl-2-oxobutanoate + H2O. The catalysed reaction is (2R,3R)-2,3-dihydroxy-3-methylpentanoate = (S)-3-methyl-2-oxopentanoate + H2O. The protein operates within amino-acid biosynthesis; L-isoleucine biosynthesis; L-isoleucine from 2-oxobutanoate: step 3/4. It functions in the pathway amino-acid biosynthesis; L-valine biosynthesis; L-valine from pyruvate: step 3/4. Its function is as follows. Functions in the biosynthesis of branched-chain amino acids. Catalyzes the dehydration of (2R,3R)-2,3-dihydroxy-3-methylpentanoate (2,3-dihydroxy-3-methylvalerate) into 2-oxo-3-methylpentanoate (2-oxo-3-methylvalerate) and of (2R)-2,3-dihydroxy-3-methylbutanoate (2,3-dihydroxyisovalerate) into 2-oxo-3-methylbutanoate (2-oxoisovalerate), the penultimate precursor to L-isoleucine and L-valine, respectively. This is Dihydroxy-acid dehydratase from Vibrio parahaemolyticus serotype O3:K6 (strain RIMD 2210633).